Consider the following 255-residue polypeptide: uncharacterized protein (255 aa).

Positions 1–23 (MKRLNKLVLGIIFLFLVISITAG) are cleaved as a signal peptide. C24 is lipidated: N-palmitoyl cysteine. The S-diacylglycerol cysteine moiety is linked to residue C24.

It belongs to the staphylococcal tandem lipoprotein family.

It localises to the cell membrane. This is an uncharacterized protein from Staphylococcus aureus (strain USA300).